We begin with the raw amino-acid sequence, 549 residues long: Glucose-6-phosphate isomerase (549 aa).

N6-acetyllysine is present on residues K80, K228, and K234. The active-site Proton donor is the E355. Catalysis depends on residues H386 and K514.

It belongs to the GPI family.

It localises to the cytoplasm. The enzyme catalyses alpha-D-glucose 6-phosphate = beta-D-fructose 6-phosphate. The protein operates within carbohydrate biosynthesis; gluconeogenesis. It functions in the pathway carbohydrate degradation; glycolysis; D-glyceraldehyde 3-phosphate and glycerone phosphate from D-glucose: step 2/4. Catalyzes the reversible isomerization of glucose-6-phosphate to fructose-6-phosphate. The polypeptide is Glucose-6-phosphate isomerase (Escherichia coli O17:K52:H18 (strain UMN026 / ExPEC)).